The chain runs to 102 residues: Small ribosomal subunit protein eS24 (102 aa).

Residues 70-102 (VYDSPAQAAEVEHDHMLERNKIGADDADAEEAE) are disordered. Basic and acidic residues predominate over residues 79–93 (EVEHDHMLERNKIGA).

This sequence belongs to the eukaryotic ribosomal protein eS24 family.

The polypeptide is Small ribosomal subunit protein eS24 (Halobacterium salinarum (strain ATCC 29341 / DSM 671 / R1)).